A 405-amino-acid polypeptide reads, in one-letter code: Diaminohydroxyphosphoribosylamino-pyrimidine deaminase (405 aa).

The CMP/dCMP-type deaminase domain occupies 256–383 (YNHEEYMLKA…DLLKKAGIVV (128 aa)). His-305 is a binding site for Zn(2+). Glu-307 serves as the catalytic Proton donor. Zn(2+) is bound by residues Cys-335 and Cys-345.

This sequence belongs to the cytidine and deoxycytidylate deaminase family. It depends on Zn(2+) as a cofactor.

Its subcellular location is the cytoplasm. It localises to the nucleus. The enzyme catalyses 2,5-diamino-6-hydroxy-4-(5-phosphoribosylamino)-pyrimidine + H2O + H(+) = 5-amino-6-(5-phospho-D-ribosylamino)uracil + NH4(+). It functions in the pathway cofactor biosynthesis; riboflavin biosynthesis; 5-amino-6-(D-ribitylamino)uracil from GTP: step 2/4. Its function is as follows. Involved in riboflavin biosynthesis. Converts 2,5-diamino-6-(ribosylamino)-4(3H)-pyrimidinone 5'-phosphate into 5-amino-6-(ribosylamino)-2,4(1H,3H)-pyrimidinedione 5'-phosphate. This Schizosaccharomyces pombe (strain 972 / ATCC 24843) (Fission yeast) protein is Diaminohydroxyphosphoribosylamino-pyrimidine deaminase.